We begin with the raw amino-acid sequence, 548 residues long: Probable malate:quinone oxidoreductase (548 aa).

This sequence belongs to the MQO family. FAD serves as cofactor.

The enzyme catalyses (S)-malate + a quinone = a quinol + oxaloacetate. Its pathway is carbohydrate metabolism; tricarboxylic acid cycle; oxaloacetate from (S)-malate (quinone route): step 1/1. In Escherichia coli O6:K15:H31 (strain 536 / UPEC), this protein is Probable malate:quinone oxidoreductase.